The primary structure comprises 127 residues: UPF0102 protein Geob_1494 (127 aa).

This sequence belongs to the UPF0102 family.

This chain is UPF0102 protein Geob_1494, found in Geotalea daltonii (strain DSM 22248 / JCM 15807 / FRC-32) (Geobacter daltonii).